The following is a 438-amino-acid chain: UDP-N-acetylmuramoylalanine--D-glutamate ligase (438 aa).

Residue 112–118 (GSNGKST) coordinates ATP.

Belongs to the MurCDEF family. The cofactor is Mg(2+).

The protein localises to the cytoplasm. The enzyme catalyses UDP-N-acetyl-alpha-D-muramoyl-L-alanine + D-glutamate + ATP = UDP-N-acetyl-alpha-D-muramoyl-L-alanyl-D-glutamate + ADP + phosphate + H(+). It participates in cell wall biogenesis; peptidoglycan biosynthesis. Functionally, cell wall formation. Catalyzes the addition of glutamate to the nucleotide precursor UDP-N-acetylmuramoyl-L-alanine (UMA). This chain is UDP-N-acetylmuramoylalanine--D-glutamate ligase (murD), found in Escherichia coli (strain K12).